We begin with the raw amino-acid sequence, 208 residues long: Imidazole glycerol phosphate synthase subunit HisH (208 aa).

The Glutamine amidotransferase type-1 domain occupies 1–206 (MIVIVDYDTG…KEMTEDEALS (206 aa)). C79 serves as the catalytic Nucleophile. Catalysis depends on residues H181 and E183.

In terms of assembly, heterodimer of HisH and HisF.

The protein resides in the cytoplasm. It carries out the reaction 5-[(5-phospho-1-deoxy-D-ribulos-1-ylimino)methylamino]-1-(5-phospho-beta-D-ribosyl)imidazole-4-carboxamide + L-glutamine = D-erythro-1-(imidazol-4-yl)glycerol 3-phosphate + 5-amino-1-(5-phospho-beta-D-ribosyl)imidazole-4-carboxamide + L-glutamate + H(+). The enzyme catalyses L-glutamine + H2O = L-glutamate + NH4(+). It participates in amino-acid biosynthesis; L-histidine biosynthesis; L-histidine from 5-phospho-alpha-D-ribose 1-diphosphate: step 5/9. Its function is as follows. IGPS catalyzes the conversion of PRFAR and glutamine to IGP, AICAR and glutamate. The HisH subunit catalyzes the hydrolysis of glutamine to glutamate and ammonia as part of the synthesis of IGP and AICAR. The resulting ammonia molecule is channeled to the active site of HisF. The sequence is that of Imidazole glycerol phosphate synthase subunit HisH from Lacticaseibacillus casei (strain BL23) (Lactobacillus casei).